The following is a 1232-amino-acid chain: Dynactin subunit 1 (1232 aa).

A CAP-Gly domain is found at 31-73 (GATLFATGKWVGVILDDSKGKNDGTVQGRRYFTCEENHGIFVR). 2 disordered regions span residues 82 to 183 (DGAD…AQVK) and 339 to 358 (SASEKQEHIKVQKQMEKKNT). A compositionally biased stretch (low complexity) spans 86 to 95 (TTSPETPEPT). A compositionally biased stretch (polar residues) spans 108–117 (PKSSKLPTRP). A compositionally biased stretch (low complexity) spans 118-130 (SSSAASSGTASAS). The span at 133-144 (EISSSEPSTPAQ) shows a compositional bias: polar residues. The span at 146–163 (PLAAPIIPSPSSAITSPV) shows a compositional bias: low complexity. Coiled-coil stretches lie at residues 170 to 505 (GPSK…KEQQ), 908 to 1005 (ETVI…RTIE), 1046 to 1071 (LLLQQIDALRLSMKHLKHENNKLKAH), and 1136 to 1166 (AAQLLEQTARLKSLSDTIDKLKNEVMKETVS). Positions 172-183 (SKEEENLRAQVK) are enriched in basic and acidic residues.

This sequence belongs to the dynactin 150 kDa subunit family. Monomer and homodimer. Subunit of dynactin, a multiprotein complex part of a tripartite complex with dynein and a adapter, such as BICDL1, BICD2 or HOOK3. The dynactin complex is built around ACTR1A/ACTB filament and consists of an actin-related filament composed of a shoulder domain, a pointed end and a barbed end. Its length is defined by its flexible shoulder domain. The soulder is composed of 2 DCTN1 subunits, 4 DCTN2 and 2 DCTN3. DCTN1/p150(glued) binds directly to microtubules and to cytoplasmic dynein.

The protein resides in the cytoplasm. The protein localises to the cytoskeleton. It localises to the microtubule organizing center. It is found in the centrosome. Its subcellular location is the centriole. The protein resides in the spindle. The protein localises to the cell cortex. In terms of biological role, part of the dynactin complex that activates the molecular motor dynein for ultra-processive transport along microtubules. Plays a key role in dynein-mediated retrograde transport of vesicles and organelles along microtubules by recruiting and tethering dynein to microtubules. Binds to both dynein and microtubules providing a link between specific cargos, microtubules and dynein. Essential for targeting dynein to microtubule plus ends, recruiting dynein to membranous cargos and enhancing dynein processivity (the ability to move along a microtubule for a long distance without falling off the track). Can also act as a brake to slow the dynein motor during motility along the microtubule. Can regulate microtubule stability by promoting microtubule formation, nucleation and polymerization and by inhibiting microtubule catastrophe in neurons. Inhibits microtubule catastrophe by binding both to microtubules and to tubulin, leading to enhanced microtubule stability along the axon. Plays a role in metaphase spindle orientation. Plays a role in centriole cohesion and subdistal appendage organization and function. Its recruitment to the centriole in a KIF3A-dependent manner is essential for the maintenance of centriole cohesion and the formation of subdistal appendage. Also required for microtubule anchoring at the mother centriole. Plays a role in primary cilia formation. This Xenopus laevis (African clawed frog) protein is Dynactin subunit 1 (dctn1).